A 333-amino-acid polypeptide reads, in one-letter code: Glyceraldehyde-3-phosphate dehydrogenase (333 aa).

Residues 11–12 (RI), D35, and T121 each bind NAD(+). D-glyceraldehyde 3-phosphate is bound by residues 151 to 153 (SCT) and T182. Catalysis depends on C152, which acts as the Nucleophile. N183 provides a ligand contact to NAD(+). Residues R197, 210–211 (TG), and R233 each bind D-glyceraldehyde 3-phosphate. An NAD(+)-binding site is contributed by N315.

Belongs to the glyceraldehyde-3-phosphate dehydrogenase family. As to quaternary structure, homotetramer.

It is found in the cytoplasm. The catalysed reaction is D-glyceraldehyde 3-phosphate + phosphate + NAD(+) = (2R)-3-phospho-glyceroyl phosphate + NADH + H(+). Its pathway is carbohydrate degradation; glycolysis; pyruvate from D-glyceraldehyde 3-phosphate: step 1/5. In terms of biological role, catalyzes the oxidative phosphorylation of glyceraldehyde 3-phosphate (G3P) to 1,3-bisphosphoglycerate (BPG) using the cofactor NAD. The first reaction step involves the formation of a hemiacetal intermediate between G3P and a cysteine residue, and this hemiacetal intermediate is then oxidized to a thioester, with concomitant reduction of NAD to NADH. The reduced NADH is then exchanged with the second NAD, and the thioester is attacked by a nucleophilic inorganic phosphate to produce BPG. The polypeptide is Glyceraldehyde-3-phosphate dehydrogenase (gap) (Thermotoga maritima (strain ATCC 43589 / DSM 3109 / JCM 10099 / NBRC 100826 / MSB8)).